We begin with the raw amino-acid sequence, 193 residues long: Protein GrpE (193 aa).

Residues 1–22 (MDPKEKEKMAEELNVEETKDTA) are compositionally biased toward basic and acidic residues. Residues 1–45 (MDPKEKEKMAEELNVEETKDTAEEQPQDDQAEEAAPLTHEEQLEK) form a disordered region. Positions 23–32 (EEQPQDDQAE) are enriched in acidic residues.

It belongs to the GrpE family. Homodimer.

It localises to the cytoplasm. Its function is as follows. Participates actively in the response to hyperosmotic and heat shock by preventing the aggregation of stress-denatured proteins, in association with DnaK and GrpE. It is the nucleotide exchange factor for DnaK and may function as a thermosensor. Unfolded proteins bind initially to DnaJ; upon interaction with the DnaJ-bound protein, DnaK hydrolyzes its bound ATP, resulting in the formation of a stable complex. GrpE releases ADP from DnaK; ATP binding to DnaK triggers the release of the substrate protein, thus completing the reaction cycle. Several rounds of ATP-dependent interactions between DnaJ, DnaK and GrpE are required for fully efficient folding. This is Protein GrpE from Bacteroides thetaiotaomicron (strain ATCC 29148 / DSM 2079 / JCM 5827 / CCUG 10774 / NCTC 10582 / VPI-5482 / E50).